The sequence spans 276 residues: Mitochondrial outer membrane protein porin 1 (276 aa).

Belongs to the eukaryotic mitochondrial porin (TC 1.B.8.1) family. As to expression, expressed in shoot meristems, root meristematic zone, lateral roots, leaves, stigma and anthers.

It localises to the mitochondrion outer membrane. Functionally, forms a channel through the mitochondrial outer membrane that allows diffusion of small hydrophilic molecules. The channel adopts an open conformation at low or zero membrane potential and a closed conformation at potentials above 30-40 mV. The open state has a weak anion selectivity whereas the closed state is cation-selective. Involved in plant development at reproductive stage, is important for pollen development and may regulate hydrogen peroxide generation during disease resistance. The sequence is that of Mitochondrial outer membrane protein porin 1 (VDAC1) from Arabidopsis thaliana (Mouse-ear cress).